The sequence spans 425 residues: Cyclin-K (425 aa).

The disordered stretch occupies residues 262–425 (GKQPIPQQPP…RRYLDDDRNL (164 aa)). A compositionally biased stretch (low complexity) spans 366 to 377 (AEPAAASELDPA). The span at 379–399 (GPAPPLPHGAPPPLPHRPPPT) shows a compositional bias: pro residues.

The protein belongs to the cyclin family.

It localises to the nucleus. Its function is as follows. Regulatory subunit of cyclin-dependent kinases that mediates activation of target kinases. Plays a role in transcriptional regulation via its role in regulating the phosphorylation of the C-terminal domain (CTD) of the large subunit of RNA polymerase II (POLR2A). In Danio rerio (Zebrafish), this protein is Cyclin-K (ccnk).